Here is a 78-residue protein sequence, read N- to C-terminus: Large ribosomal subunit protein bL28 (78 aa).

A disordered region spans residues 1–21 (MSRVCQLSGKRANNGMAVSHS).

It belongs to the bacterial ribosomal protein bL28 family.

In Synechococcus sp. (strain RCC307), this protein is Large ribosomal subunit protein bL28.